A 152-amino-acid polypeptide reads, in one-letter code: UPF0260 protein BR1477/BS1330_I1471 (152 aa).

This sequence belongs to the UPF0260 family.

The chain is UPF0260 protein BR1477/BS1330_I1471 from Brucella suis biovar 1 (strain 1330).